We begin with the raw amino-acid sequence, 553 residues long: Glycerol kinase 2 (553 aa).

Residue Thr20 coordinates substrate. Arg24 contacts ATP. Positions 94, 148, and 259 each coordinate substrate. ATP-binding positions include Thr281, Gly326, and 427–431 (GMTNN). The chain crosses the membrane as a helical span at residues 526–546 (IFSSMPLGFFIVSSMVMLIGA).

It belongs to the FGGY kinase family. As to quaternary structure, interacts with ARMC12 and PLD6.

It is found in the mitochondrion outer membrane. Its subcellular location is the cytoplasm. It carries out the reaction glycerol + ATP = sn-glycerol 3-phosphate + ADP + H(+). It functions in the pathway polyol metabolism; glycerol degradation via glycerol kinase pathway; sn-glycerol 3-phosphate from glycerol: step 1/1. In terms of biological role, key enzyme in the regulation of glycerol uptake and metabolism. Essential for male fertility and sperm mitochondrial sheath formation. Required for proper arrangement of crescent-like mitochondria to form the mitochondrial sheath during spermatogenesis. Can induce mitochondrial clustering through interactions with PLD6 and up-regulation of phosphatidic acid synthesis in the mitochondria. The chain is Glycerol kinase 2 (GK2) from Macaca fascicularis (Crab-eating macaque).